Here is a 295-residue protein sequence, read N- to C-terminus: Nucleotide-binding protein BPUM_3115 (295 aa).

16–23 contacts ATP; the sequence is GMSGAGKT. Position 67 to 70 (67 to 70) interacts with GTP; the sequence is DLRG.

This sequence belongs to the RapZ-like family.

Functionally, displays ATPase and GTPase activities. The sequence is that of Nucleotide-binding protein BPUM_3115 from Bacillus pumilus (strain SAFR-032).